A 512-amino-acid chain; its full sequence is Cobyric acid synthase (512 aa).

Residues 251–451 enclose the GATase cobBQ-type domain; sequence ALDITVIRLP…IHGLFDSANF (201 aa). Cys-332 acts as the Nucleophile in catalysis. The active site involves His-443.

The protein belongs to the CobB/CobQ family. CobQ subfamily.

It functions in the pathway cofactor biosynthesis; adenosylcobalamin biosynthesis. Its function is as follows. Catalyzes amidations at positions B, D, E, and G on adenosylcobyrinic A,C-diamide. NH(2) groups are provided by glutamine, and one molecule of ATP is hydrogenolyzed for each amidation. The chain is Cobyric acid synthase from Photorhabdus laumondii subsp. laumondii (strain DSM 15139 / CIP 105565 / TT01) (Photorhabdus luminescens subsp. laumondii).